Reading from the N-terminus, the 154-residue chain is Large ribosomal subunit protein uL13 (154 aa).

The protein belongs to the universal ribosomal protein uL13 family. In terms of assembly, part of the 50S ribosomal subunit.

In terms of biological role, this protein is one of the early assembly proteins of the 50S ribosomal subunit, although it is not seen to bind rRNA by itself. It is important during the early stages of 50S assembly. This is Large ribosomal subunit protein uL13 from Bradyrhizobium diazoefficiens (strain JCM 10833 / BCRC 13528 / IAM 13628 / NBRC 14792 / USDA 110).